We begin with the raw amino-acid sequence, 460 residues long: 1-aminocyclopropane-1-carboxylate synthase 11 (460 aa).

Substrate-binding residues include E45 and Y83. Residue K267 is modified to N6-(pyridoxal phosphate)lysine.

Belongs to the class-I pyridoxal-phosphate-dependent aminotransferase family. As to quaternary structure, homodimer and heterodimer. In vivo, the relevance of heterodimerization with other ACS enzymes is however unsure. Interacts with GRF3. Pyridoxal 5'-phosphate serves as cofactor. May be processed at its C-terminus. In terms of tissue distribution, expressed in roots.

The catalysed reaction is S-adenosyl-L-methionine = 1-aminocyclopropane-1-carboxylate + S-methyl-5'-thioadenosine + H(+). It participates in alkene biosynthesis; ethylene biosynthesis via S-adenosyl-L-methionine; ethylene from S-adenosyl-L-methionine: step 1/2. In terms of biological role, 1-aminocyclopropane-1-carboxylate synthase (ACS) enzymes catalyze the conversion of S-adenosyl-L-methionine (SAM) into 1-aminocyclopropane-1-carboxylate (ACC), a direct precursor of ethylene. The polypeptide is 1-aminocyclopropane-1-carboxylate synthase 11 (ACS11) (Arabidopsis thaliana (Mouse-ear cress)).